We begin with the raw amino-acid sequence, 309 residues long: Aspartate carbamoyltransferase catalytic subunit (309 aa).

Positions 58 and 59 each coordinate carbamoyl phosphate. Lysine 86 is a binding site for L-aspartate. Carbamoyl phosphate-binding residues include arginine 108, histidine 136, and glutamine 139. 2 residues coordinate L-aspartate: arginine 169 and arginine 223. Glycine 265 and proline 266 together coordinate carbamoyl phosphate.

The protein belongs to the aspartate/ornithine carbamoyltransferase superfamily. ATCase family. Heterododecamer (2C3:3R2) of six catalytic PyrB chains organized as two trimers (C3), and six regulatory PyrI chains organized as three dimers (R2).

It catalyses the reaction carbamoyl phosphate + L-aspartate = N-carbamoyl-L-aspartate + phosphate + H(+). It functions in the pathway pyrimidine metabolism; UMP biosynthesis via de novo pathway; (S)-dihydroorotate from bicarbonate: step 2/3. Functionally, catalyzes the condensation of carbamoyl phosphate and aspartate to form carbamoyl aspartate and inorganic phosphate, the committed step in the de novo pyrimidine nucleotide biosynthesis pathway. This chain is Aspartate carbamoyltransferase catalytic subunit, found in Akkermansia muciniphila (strain ATCC BAA-835 / DSM 22959 / JCM 33894 / BCRC 81048 / CCUG 64013 / CIP 107961 / Muc).